The chain runs to 360 residues: GTP 3',8-cyclase (360 aa).

Residues 33 to 251 (RFGRSATDLR…LQPHFRLRPD (219 aa)) enclose the Radical SAM core domain. Arg-42 contributes to the GTP binding site. Residues Cys-49 and Cys-53 each coordinate [4Fe-4S] cluster. Tyr-55 contacts S-adenosyl-L-methionine. Cys-56 contacts [4Fe-4S] cluster. Residue Arg-93 coordinates GTP. Gly-97 serves as a coordination point for S-adenosyl-L-methionine. Thr-124 is a GTP binding site. Ser-148 contributes to the S-adenosyl-L-methionine binding site. Position 185 (Lys-185) interacts with GTP. Met-219 contributes to the S-adenosyl-L-methionine binding site. [4Fe-4S] cluster contacts are provided by Cys-287 and Cys-290. Residue 292–294 (RTR) participates in GTP binding. Cys-304 lines the [4Fe-4S] cluster pocket.

This sequence belongs to the radical SAM superfamily. MoaA family. In terms of assembly, monomer and homodimer. [4Fe-4S] cluster is required as a cofactor.

The enzyme catalyses GTP + AH2 + S-adenosyl-L-methionine = (8S)-3',8-cyclo-7,8-dihydroguanosine 5'-triphosphate + 5'-deoxyadenosine + L-methionine + A + H(+). Its pathway is cofactor biosynthesis; molybdopterin biosynthesis. Its function is as follows. Catalyzes the cyclization of GTP to (8S)-3',8-cyclo-7,8-dihydroguanosine 5'-triphosphate. This chain is GTP 3',8-cyclase, found in Mycobacterium marinum (strain ATCC BAA-535 / M).